The chain runs to 393 residues: Probable acetyl-CoA acetyltransferase (393 aa).

Cysteine 88 (acyl-thioester intermediate) is an active-site residue. Active-site proton acceptor residues include histidine 349 and cysteine 379.

This sequence belongs to the thiolase-like superfamily. Thiolase family.

It carries out the reaction 2 acetyl-CoA = acetoacetyl-CoA + CoA. The sequence is that of Probable acetyl-CoA acetyltransferase (fadA4) from Mycobacterium leprae (strain TN).